A 493-amino-acid chain; its full sequence is Galactose-1-phosphate uridylyltransferase (493 aa).

The protein belongs to the galactose-1-phosphate uridylyltransferase type 2 family.

The protein resides in the cytoplasm. The enzyme catalyses alpha-D-galactose 1-phosphate + UDP-alpha-D-glucose = alpha-D-glucose 1-phosphate + UDP-alpha-D-galactose. Its pathway is carbohydrate metabolism; galactose metabolism. This chain is Galactose-1-phosphate uridylyltransferase, found in Streptococcus pneumoniae (strain CGSP14).